The following is a 170-amino-acid chain: Protein SprT (170 aa).

The SprT-like domain occupies 25 to 165 (SEQFFDRTFA…QYCKGRLEPV (141 aa)). His-78 is a Zn(2+) binding site. Glu-79 is an active-site residue. His-82 lines the Zn(2+) pocket.

This sequence belongs to the SprT family. Zn(2+) serves as cofactor.

It localises to the cytoplasm. The polypeptide is Protein SprT (Actinobacillus succinogenes (strain ATCC 55618 / DSM 22257 / CCUG 43843 / 130Z)).